The primary structure comprises 309 residues: Homoserine O-acetyltransferase (309 aa).

The active-site Acyl-thioester intermediate is the cysteine 148. Positions 169 and 198 each coordinate substrate. The Proton acceptor role is filled by histidine 241. Glutamate 243 is an active-site residue. Arginine 255 is a binding site for substrate.

Belongs to the MetA family.

It is found in the cytoplasm. The enzyme catalyses L-homoserine + acetyl-CoA = O-acetyl-L-homoserine + CoA. Its pathway is amino-acid biosynthesis; L-methionine biosynthesis via de novo pathway; O-acetyl-L-homoserine from L-homoserine: step 1/1. Functionally, transfers an acetyl group from acetyl-CoA to L-homoserine, forming acetyl-L-homoserine. In vitro, can also use propionyl-CoA as acyl donor. This is Homoserine O-acetyltransferase from Shouchella clausii (Alkalihalobacillus clausii).